We begin with the raw amino-acid sequence, 397 residues long: Putative gustatory receptor 85a (397 aa).

Topologically, residues M1–V56 are cytoplasmic. Residues L57–F77 form a helical membrane-spanning segment. The Extracellular portion of the chain corresponds to D78–T90. A helical transmembrane segment spans residues L91–M111. Over G112 to D151 the chain is Cytoplasmic. Residues Y152–F172 form a helical membrane-spanning segment. Over T173 to C186 the chain is Extracellular. Residues F187–I207 traverse the membrane as a helical segment. Residues T208 to R268 lie on the Cytoplasmic side of the membrane. Residues N269–L289 traverse the membrane as a helical segment. At Q290–E293 the chain is on the extracellular side. Residues L294–V314 traverse the membrane as a helical segment. Topologically, residues N315–R375 are cytoplasmic. The helical transmembrane segment at S376–T396 threads the bilayer. Position 397 (N397) is a topological domain, extracellular.

Belongs to the insect chemoreceptor superfamily. Gustatory receptor (GR) family. Gr22e subfamily.

Its subcellular location is the cell membrane. Its function is as follows. Probable gustatory receptor which mediates acceptance or avoidance behavior, depending on its substrates. The protein is Putative gustatory receptor 85a (Gr85a) of Drosophila melanogaster (Fruit fly).